Here is a 309-residue protein sequence, read N- to C-terminus: MAKTYIFGHQNPDTDAIASAIIMADFEQLTGNSEATPYRLGDINPETKFALDHFEVKAPELLSDNLDGREVILVDHNEFQQSAETISDAEIKHVVDHHRIANFETASPLWYRAEPVGCTATILYKMYKERGFEIKPHIAGLMISAIISDSLLFKSPTCTDEDVNAAKDLKDLANVDLDEYGLEMLKAGASTTDKSAEELLDMDAKSFNMGDYVTRIAQVNTVDIDEVLNRKEDLEKAMLETSANEKYDLFVLVVTDIINSDSKILVVGAEKDKVGEAFKVQLDDGMAFLSGVVSRKKQVVPQITDALIK.

Mn(2+)-binding residues include H9, D13, D15, D75, H97, and D149.

It belongs to the PPase class C family. Mn(2+) serves as cofactor.

Its subcellular location is the cytoplasm. It carries out the reaction diphosphate + H2O = 2 phosphate + H(+). This chain is Probable manganese-dependent inorganic pyrophosphatase, found in Staphylococcus haemolyticus (strain JCSC1435).